A 154-amino-acid chain; its full sequence is Superoxide dismutase [Cu-Zn] (154 aa).

3 residues coordinate Cu cation: His-47, His-49, and His-64. Cys-58 and Cys-147 are joined by a disulfide. Zn(2+) is bound by residues His-64, His-72, His-81, and Asp-84. Cu cation is bound at residue His-121. Residues 125-137 are compositionally biased toward basic and acidic residues; it reads DDLGRGGNEESKK. The disordered stretch occupies residues 125 to 147; sequence DDLGRGGNEESKKTGNAGPRPAC. Arg-144 provides a ligand contact to substrate.

As to quaternary structure, homodimer. Cu cation serves as cofactor. It depends on Zn(2+) as a cofactor.

The protein resides in the cytoplasm. It carries out the reaction 2 superoxide + 2 H(+) = H2O2 + O2. Functionally, destroys radicals which are normally produced within the cells and which are toxic to biological systems. This is Superoxide dismutase [Cu-Zn] from Aspergillus niger.